The primary structure comprises 888 residues: Alanine--tRNA ligase (888 aa).

Residues H570, H574, C673, and H677 each coordinate Zn(2+).

The protein belongs to the class-II aminoacyl-tRNA synthetase family. Requires Zn(2+) as cofactor.

Its subcellular location is the cytoplasm. It carries out the reaction tRNA(Ala) + L-alanine + ATP = L-alanyl-tRNA(Ala) + AMP + diphosphate. In terms of biological role, catalyzes the attachment of alanine to tRNA(Ala) in a two-step reaction: alanine is first activated by ATP to form Ala-AMP and then transferred to the acceptor end of tRNA(Ala). Also edits incorrectly charged Ser-tRNA(Ala) and Gly-tRNA(Ala) via its editing domain. In Chlorobium phaeobacteroides (strain DSM 266 / SMG 266 / 2430), this protein is Alanine--tRNA ligase.